The primary structure comprises 330 residues: Putative pentatricopeptide repeat-containing protein At5g36300 (330 aa).

PPR repeat units follow at residues 10-44 (SLSM…GSRP), 45-75 (DPLS…VVRF), 83-113 (VRLY…KFRL), 114-148 (NSFV…GLPM), 149-179 (DVEI…LQRS), 185-215 (NIRT…IFED), 231-265 (SANL…GIEP), 266-296 (NLIM…IKET), and 302-330 (DVVT…LVTL).

This sequence belongs to the PPR family. P subfamily.

This is Putative pentatricopeptide repeat-containing protein At5g36300 from Arabidopsis thaliana (Mouse-ear cress).